Reading from the N-terminus, the 177-residue chain is Small ribosomal subunit protein bS16 (177 aa).

The segment at 80–177 is disordered; it reads GIIAMPANGS…AAEAPKEEAK (98 aa). A compositionally biased stretch (low complexity) spans 107–122; it reads AAPAAAPKAEAAPAAE.

Belongs to the bacterial ribosomal protein bS16 family.

This Pelagibacter ubique (strain HTCC1062) protein is Small ribosomal subunit protein bS16.